The primary structure comprises 600 residues: Probable translation initiation factor IF-2 (600 aa).

A tr-type G domain is found at 13–228; sequence LRTPIVAVLG…VLMGLAQRYM (216 aa). Residues 22–29 are G1; it reads GHVDHGKT. 22 to 29 lines the GTP pocket; sequence GHVDHGKT. Residues 47–51 are G2; it reads AITQH. Residues 84 to 87 form a G3 region; the sequence is DTPG. Residues 84 to 88 and 138 to 141 each bind GTP; these read DTPGH and NKID. Positions 138–141 are G4; it reads NKID. The tract at residues 140–162 is disordered; the sequence is IDTTPGWNPNPDAPVQGTYDDQS. The segment at 206–208 is G5; the sequence is SAE.

It belongs to the TRAFAC class translation factor GTPase superfamily. Classic translation factor GTPase family. IF-2 subfamily.

Functionally, function in general translation initiation by promoting the binding of the formylmethionine-tRNA to ribosomes. Seems to function along with eIF-2. In Halobacterium salinarum (strain ATCC 700922 / JCM 11081 / NRC-1) (Halobacterium halobium), this protein is Probable translation initiation factor IF-2.